Here is a 408-residue protein sequence, read N- to C-terminus: Substance-P receptor (408 aa).

Topologically, residues 1 to 32 (MNSNISAQNDSALNSTIQNGTKINQFIQPPWQ) are extracellular. Residues Asn-4, Asn-9, Asn-14, and Asn-19 are each glycosylated (N-linked (GlcNAc...) asparagine). Residues 33–55 (IALWSVAYSIIVIVSLVGNIIVM) form a helical membrane-spanning segment. The Cytoplasmic portion of the chain corresponds to 56–65 (WIIIAHKRMR). A helical transmembrane segment spans residues 66–87 (TVTNYFLVNLAFAEASMSAFNT). Over 88–107 (VINFTYAIHNHWYYGLIYCK) the chain is Extracellular. The cysteines at positions 106 and 181 are disulfide-linked. The helical transmembrane segment at 108–129 (FHNFFPISAVFTSIYSMTAIAL) threads the bilayer. Over 130-149 (DRYMAIIHPLKPRLSATATK) the chain is Cytoplasmic. The chain crosses the membrane as a helical span at residues 150–170 (IVICVIWSFSFCMAFPLGYYA). Over 171-196 (DVYPMEGGDICYLNWPDSEENRKYEQ) the chain is Extracellular. The helical transmembrane segment at 197–221 (VYQVLVFCLIYILPLLVIGCAYTFI) threads the bilayer. At 222–250 (GMTLWASEIPGDSSDRYHEQVVAKRKVVK) the chain is on the cytoplasmic side. A helical membrane pass occupies residues 251 to 272 (MMIVVVCTFAICWLPFHIFFLL). The Extracellular portion of the chain corresponds to 273-283 (QTLHEMTQKFY). The helical transmembrane segment at 284-308 (QQFYLAIMWLAMSSTMYNPIIYCCL) threads the bilayer. Residues 309-408 (NDRFRIGFKH…SSSFYSNNLA (100 aa)) are Cytoplasmic-facing. Cys-323 is lipidated: S-palmitoyl cysteine. The disordered stretch occupies residues 366–408 (DEEAEENGKSSKRLSLDLTSNGSSRSVCKTMSDSSSFYSNNLA). Residues 382 to 408 (DLTSNGSSRSVCKTMSDSSSFYSNNLA) are compositionally biased toward polar residues.

Belongs to the G-protein coupled receptor 1 family.

It is found in the cell membrane. In terms of biological role, this is a receptor for the tachykinin neuropeptide substance P. It is probably associated with G proteins that activate a phosphatidylinositol-calcium second messenger system. This chain is Substance-P receptor (TACR1), found in Aquarana catesbeiana (American bullfrog).